Consider the following 647-residue polypeptide: LIM domain kinase 1 (647 aa).

LIM zinc-binding domains are found at residues 25–75 (CASC…CKKD) and 84–137 (CHGC…CGHC). The region spanning 165-258 (LVSIPASSHG…LLQLTLEHDP (94 aa)) is the PDZ domain. Ser210 carries the phosphoserine modification. Thr229 carries the phosphothreonine modification. Positions 260–319 (DTLGHGLGPETSPLSSPAYTPSGEAGSSARQKPVLRSCSIDRSPGAGSLGSPASQRKDLG) are disordered. A phosphoserine mark is found at Ser298, Ser302, Ser307, and Ser310. Over residues 302–313 (SPGAGSLGSPAS) the composition is skewed to low complexity. Ser323 is modified (phosphoserine; by MAPKAPK2). Position 337 is a phosphoserine (Ser337). In terms of domain architecture, Protein kinase spans 339–604 (LIHGEVLGKG…PSFVKLEHWL (266 aa)). Residues 345–353 (LGKGCFGQA) and Lys368 each bind ATP. Asp460 is an active-site residue. Phosphothreonine; by ROCK1 and PAK1 is present on Thr508.

Belongs to the protein kinase superfamily. TKL Ser/Thr protein kinase family. In terms of assembly, interacts (via LIM domain) with the cytoplasmic domain of NRG1. Interacts with NISCH. Interacts with RLIM and RNF6. Self-associates to form homodimers. Interacts with HSP90AA1; this interaction promotes LIMK1 dimerization and subsequent transphosphorylation. Interacts with CDKN1C. Interacts with SSH1. Interacts with ROCK1. Interacts (via LIM zinc-binding domains) with FAM89B/LRAP25 (via LRR repeat). Forms a tripartite complex with CDC42BPA, CDC42BPB and FAM89B/LRAP25. Post-translationally, autophosphorylated. Phosphorylated on Thr-508 by ROCK1 and PAK1, resulting in activation. Phosphorylated by PAK4 which increases the ability of LIMK1 to phosphorylate cofilin. Phosphorylated at Ser-323 by MAPKAPK2 during activation of VEGFA-induced signaling, which results in activation of LIMK1 and promotion of actin reorganization, cell migration, and tubule formation of endothelial cells. Dephosphorylated and inactivated by SSH1. Phosphorylated by CDC42BP. Ubiquitinated. 'Lys-48'-linked polyubiquitination by RNF6 leads to proteasomal degradation through the 26S proteasome, modulating LIMK1 levels in the growth cone and its effect on axonal outgrowth. Also polyubiquitinated by RLIM. In terms of tissue distribution, highest expression in both adult and fetal nervous system. Detected ubiquitously throughout the different regions of adult brain, with highest levels in the cerebral cortex. Expressed to a lesser extent in heart and skeletal muscle.

It is found in the cytoplasm. It localises to the nucleus. The protein resides in the cytoskeleton. Its subcellular location is the cell projection. The protein localises to the lamellipodium. It carries out the reaction L-seryl-[protein] + ATP = O-phospho-L-seryl-[protein] + ADP + H(+). The enzyme catalyses L-threonyl-[protein] + ATP = O-phospho-L-threonyl-[protein] + ADP + H(+). Functionally, serine/threonine-protein kinase that plays an essential role in the regulation of actin filament dynamics. Acts downstream of several Rho family GTPase signal transduction pathways. Activated by upstream kinases including ROCK1, PAK1 and PAK4, which phosphorylate LIMK1 on a threonine residue located in its activation loop. LIMK1 subsequently phosphorylates and inactivates the actin binding/depolymerizing factors cofilin-1/CFL1, cofilin-2/CFL2 and destrin/DSTN, thereby preventing the cleavage of filamentous actin (F-actin), and stabilizing the actin cytoskeleton. In this way LIMK1 regulates several actin-dependent biological processes including cell motility, cell cycle progression, and differentiation. Phosphorylates TPPP on serine residues, thereby promoting microtubule disassembly. Stimulates axonal outgrowth and may be involved in brain development. Has a dominant negative effect on actin cytoskeletal changes. Required for atypical chemokine receptor ACKR2-induced phosphorylation of cofilin (CFL1). This chain is LIM domain kinase 1 (LIMK1), found in Homo sapiens (Human).